Reading from the N-terminus, the 37-residue chain is Large ribosomal subunit protein bL36 (37 aa).

Belongs to the bacterial ribosomal protein bL36 family.

The polypeptide is Large ribosomal subunit protein bL36 (Alkaliphilus oremlandii (strain OhILAs) (Clostridium oremlandii (strain OhILAs))).